A 37-amino-acid polypeptide reads, in one-letter code: Large ribosomal subunit protein bL36 (37 aa).

It belongs to the bacterial ribosomal protein bL36 family.

The polypeptide is Large ribosomal subunit protein bL36 (Mycobacterium leprae (strain Br4923)).